Here is a 208-residue protein sequence, read N- to C-terminus: Uracil phosphoribosyltransferase (208 aa).

5-phospho-alpha-D-ribose 1-diphosphate contacts are provided by residues Arg77, Arg102, and 129–137 (DPMLATGNS). Uracil is bound by residues Ile193 and 198–200 (GDA). Asp199 contributes to the 5-phospho-alpha-D-ribose 1-diphosphate binding site.

The protein belongs to the UPRTase family. It depends on Mg(2+) as a cofactor.

The enzyme catalyses UMP + diphosphate = 5-phospho-alpha-D-ribose 1-diphosphate + uracil. The protein operates within pyrimidine metabolism; UMP biosynthesis via salvage pathway; UMP from uracil: step 1/1. With respect to regulation, allosterically activated by GTP. Its function is as follows. Catalyzes the conversion of uracil and 5-phospho-alpha-D-ribose 1-diphosphate (PRPP) to UMP and diphosphate. The polypeptide is Uracil phosphoribosyltransferase (Mycoplasmopsis pulmonis (strain UAB CTIP) (Mycoplasma pulmonis)).